Consider the following 185-residue polypeptide: A-type ATP synthase subunit E (185 aa).

The protein belongs to the V-ATPase E subunit family. As to quaternary structure, has multiple subunits with at least A(3), B(3), C, D, E, F, H, I and proteolipid K(x).

It localises to the cell membrane. Functionally, component of the A-type ATP synthase that produces ATP from ADP in the presence of a proton gradient across the membrane. The polypeptide is A-type ATP synthase subunit E (Thermoplasma acidophilum (strain ATCC 25905 / DSM 1728 / JCM 9062 / NBRC 15155 / AMRC-C165)).